The chain runs to 184 residues: Peptidyl-tRNA hydrolase (184 aa).

Tyrosine 14 contributes to the tRNA binding site. The active-site Proton acceptor is the histidine 19. TRNA-binding residues include phenylalanine 60 and asparagine 62.

It belongs to the PTH family. Monomer.

The protein localises to the cytoplasm. It catalyses the reaction an N-acyl-L-alpha-aminoacyl-tRNA + H2O = an N-acyl-L-amino acid + a tRNA + H(+). Functionally, hydrolyzes ribosome-free peptidyl-tRNAs (with 1 or more amino acids incorporated), which drop off the ribosome during protein synthesis, or as a result of ribosome stalling. Its function is as follows. Catalyzes the release of premature peptidyl moieties from peptidyl-tRNA molecules trapped in stalled 50S ribosomal subunits, and thus maintains levels of free tRNAs and 50S ribosomes. This is Peptidyl-tRNA hydrolase from Mesomycoplasma hyopneumoniae (strain 232) (Mycoplasma hyopneumoniae).